A 31-amino-acid polypeptide reads, in one-letter code: Cytochrome b6-f complex subunit 6 (31 aa).

A helical transmembrane segment spans residues 4-24; it reads ITSYFGFLLAALTLTLALFIG.

It belongs to the PetL family. The 4 large subunits of the cytochrome b6-f complex are cytochrome b6, subunit IV (17 kDa polypeptide, PetD), cytochrome f and the Rieske protein, while the 4 small subunits are PetG, PetL, PetM and PetN. The complex functions as a dimer.

The protein localises to the plastid. It is found in the chloroplast thylakoid membrane. Its function is as follows. Component of the cytochrome b6-f complex, which mediates electron transfer between photosystem II (PSII) and photosystem I (PSI), cyclic electron flow around PSI, and state transitions. PetL is important for photoautotrophic growth as well as for electron transfer efficiency and stability of the cytochrome b6-f complex. This is Cytochrome b6-f complex subunit 6 from Oryza sativa subsp. japonica (Rice).